The primary structure comprises 482 residues: Putative transposase R186 (482 aa).

Zn(2+)-binding residues include Cys416, Cys419, Cys433, and Cys435.

It in the central section; belongs to the transposase 2 family. This sequence in the C-terminal section; belongs to the transposase 35 family.

The polypeptide is Putative transposase R186 (Acanthamoeba polyphaga (Amoeba)).